We begin with the raw amino-acid sequence, 320 residues long: Cytochrome f (320 aa).

The first 35 residues, 1–35 (MRNINTYDWMKKWMTRSISILVMIHMITRTSISNA), serve as a signal peptide directing secretion. The heme site is built by Y36, C56, C59, and H60. The helical transmembrane segment at 286 to 306 (VQGLLLLLASVILAQIFLVLK) threads the bilayer.

This sequence belongs to the cytochrome f family. As to quaternary structure, the 4 large subunits of the cytochrome b6-f complex are cytochrome b6, subunit IV (17 kDa polypeptide, petD), cytochrome f and the Rieske protein, while the 4 small subunits are PetG, PetL, PetM and PetN. The complex functions as a dimer. Heme serves as cofactor.

Its subcellular location is the plastid. The protein resides in the chloroplast thylakoid membrane. Functionally, component of the cytochrome b6-f complex, which mediates electron transfer between photosystem II (PSII) and photosystem I (PSI), cyclic electron flow around PSI, and state transitions. The sequence is that of Cytochrome f from Cycas taitungensis (Prince sago).